Reading from the N-terminus, the 106-residue chain is MGCMKSKETFPFPTTLDIDKLHESEEAFIPDDSSQYRTPSPGEQQQVQEVKKLPEPGAVIGALILEFADRLASEIVEDALQQWACENIQYYNIPYIESEGSDTTIN.

A lipid anchor (N-myristoyl glycine) is attached at Gly2. Residue Cys3 is the site of S-palmitoyl cysteine attachment. The residue at position 40 (Ser40) is a Phosphoserine. A PKA-RI-binding region spans residues 62 to 85 (ALILEFADRLASEIVEDALQQWAC). The residue at position 98 (Ser98) is a Phosphoserine.

It belongs to the small membrane AKAP family. In terms of assembly, interacts with PKA type I regulatory subunits PRKAR1A and PRKAR1B. Also binds to type II regulatory subunits, but at a tenfold lower affinity. May be palmitoylated at Cys-3. As to expression, widely expressed, with very low levels in spleen and liver.

The protein resides in the cell membrane. In terms of biological role, binds to type I regulatory subunits of protein kinase A (PKA-RI) and may anchor/target them to the plasma membrane. The sequence is that of Small membrane A-kinase anchor protein from Mus musculus (Mouse).